An 868-amino-acid polypeptide reads, in one-letter code: Translation initiation factor IF-2 (868 aa).

A compositionally biased stretch (basic and acidic residues) spans 199–209; it reads SKKEEVKPEKV. The tract at residues 199 to 269 is disordered; it reads SKKEEVKPEK…GTEKSDKYRE (71 aa). Over residues 249–260 the composition is skewed to basic residues; it reads RGGRSKFKKKKG. The tr-type G domain occupies 368–537; that stretch reads GRAPVVTIMG…LLQSEVLELK (170 aa). The G1 stretch occupies residues 377-384; sequence GHVDHGKT. 377 to 384 provides a ligand contact to GTP; that stretch reads GHVDHGKT. The segment at 402–406 is G2; the sequence is GITQH. The G3 stretch occupies residues 423–426; that stretch reads DTPG. Residues 423–427 and 477–480 contribute to the GTP site; these read DTPGH and NKMD. Positions 477 to 480 are G4; that stretch reads NKMD. Residues 513 to 515 form a G5 region; it reads SAK.

The protein belongs to the TRAFAC class translation factor GTPase superfamily. Classic translation factor GTPase family. IF-2 subfamily.

Its subcellular location is the cytoplasm. In terms of biological role, one of the essential components for the initiation of protein synthesis. Protects formylmethionyl-tRNA from spontaneous hydrolysis and promotes its binding to the 30S ribosomal subunits. Also involved in the hydrolysis of GTP during the formation of the 70S ribosomal complex. The protein is Translation initiation factor IF-2 of Legionella pneumophila (strain Paris).